A 226-amino-acid polypeptide reads, in one-letter code: Uracil-DNA glycosylase (226 aa).

Catalysis depends on D64, which acts as the Proton acceptor.

Belongs to the uracil-DNA glycosylase (UDG) superfamily. UNG family.

Its subcellular location is the cytoplasm. It carries out the reaction Hydrolyzes single-stranded DNA or mismatched double-stranded DNA and polynucleotides, releasing free uracil.. Excises uracil residues from the DNA which can arise as a result of misincorporation of dUMP residues by DNA polymerase or due to deamination of cytosine. This chain is Uracil-DNA glycosylase, found in Vibrio vulnificus (strain CMCP6).